The chain runs to 355 residues: Peptide chain release factor 1 (355 aa).

Gln229 carries the post-translational modification N5-methylglutamine. A disordered region spans residues 280–299 (LDRERSAARKGQVGSGDRSE).

Belongs to the prokaryotic/mitochondrial release factor family. Post-translationally, methylated by PrmC. Methylation increases the termination efficiency of RF1.

Its subcellular location is the cytoplasm. Functionally, peptide chain release factor 1 directs the termination of translation in response to the peptide chain termination codons UAG and UAA. The polypeptide is Peptide chain release factor 1 (Parvibaculum lavamentivorans (strain DS-1 / DSM 13023 / NCIMB 13966)).